We begin with the raw amino-acid sequence, 191 residues long: UPF0312 protein Sden_2128 (191 aa).

An N-terminal signal peptide occupies residues 1-22 (MKKHLLASLLGASLLLPTAVNA).

Belongs to the UPF0312 family. Type 1 subfamily.

It is found in the periplasm. This Shewanella denitrificans (strain OS217 / ATCC BAA-1090 / DSM 15013) protein is UPF0312 protein Sden_2128.